Here is a 136-residue protein sequence, read N- to C-terminus: Large ribosomal subunit protein bL17 (136 aa).

Belongs to the bacterial ribosomal protein bL17 family. In terms of assembly, part of the 50S ribosomal subunit. Contacts protein L32.

In Rickettsia africae (strain ESF-5), this protein is Large ribosomal subunit protein bL17.